The primary structure comprises 499 residues: Glycerol kinase (499 aa).

Threonine 11 is an ADP binding site. The ATP site is built by threonine 11, serine 12, and serine 13. Threonine 11 is a sn-glycerol 3-phosphate binding site. ADP is bound at residue arginine 15. Sn-glycerol 3-phosphate is bound by residues arginine 81, glutamate 82, tyrosine 133, and aspartate 242. Arginine 81, glutamate 82, tyrosine 133, aspartate 242, and glutamine 243 together coordinate glycerol. ADP is bound by residues threonine 264 and glycine 309. Residues threonine 264, glycine 309, glutamine 313, and glycine 414 each contribute to the ATP site. ADP is bound by residues glycine 414 and asparagine 418.

This sequence belongs to the FGGY kinase family.

It carries out the reaction glycerol + ATP = sn-glycerol 3-phosphate + ADP + H(+). It functions in the pathway polyol metabolism; glycerol degradation via glycerol kinase pathway; sn-glycerol 3-phosphate from glycerol: step 1/1. Its activity is regulated as follows. Inhibited by fructose 1,6-bisphosphate (FBP). Functionally, key enzyme in the regulation of glycerol uptake and metabolism. Catalyzes the phosphorylation of glycerol to yield sn-glycerol 3-phosphate. The protein is Glycerol kinase of Methylibium petroleiphilum (strain ATCC BAA-1232 / LMG 22953 / PM1).